Reading from the N-terminus, the 122-residue chain is Small ribosomal subunit protein uS13 (122 aa).

The tract at residues 95 to 122 is disordered; that stretch reads GLPVRGQRTKTNARTRKGPKKTIAGKKK.

It belongs to the universal ribosomal protein uS13 family. In terms of assembly, part of the 30S ribosomal subunit. Forms a loose heterodimer with protein S19. Forms two bridges to the 50S subunit in the 70S ribosome.

Located at the top of the head of the 30S subunit, it contacts several helices of the 16S rRNA. In the 70S ribosome it contacts the 23S rRNA (bridge B1a) and protein L5 of the 50S subunit (bridge B1b), connecting the 2 subunits; these bridges are implicated in subunit movement. Contacts the tRNAs in the A and P-sites. The protein is Small ribosomal subunit protein uS13 of Corynebacterium diphtheriae (strain ATCC 700971 / NCTC 13129 / Biotype gravis).